Consider the following 623-residue polypeptide: Chaperone protein dnaK (623 aa).

A disordered region spans residues 598-623; sequence TPDAGAEGGAAPSQDDAIETDFSTEK.

The protein belongs to the heat shock protein 70 family.

It localises to the plastid. It is found in the chloroplast. Acts as a chaperone. The sequence is that of Chaperone protein dnaK from Emiliania huxleyi (Coccolithophore).